A 224-amino-acid chain; its full sequence is uncharacterized protein (224 aa).

The interval 203–224 (ELKKKKKKKIKKPKEIRNQKNV) is disordered. Basic residues predominate over residues 204–214 (LKKKKKKKIKK). The segment covering 215–224 (PKEIRNQKNV) has biased composition (basic and acidic residues).

This is an uncharacterized protein from Mycoplasma genitalium (strain ATCC 33530 / DSM 19775 / NCTC 10195 / G37) (Mycoplasmoides genitalium).